The chain runs to 94 residues: Small ribosomal subunit protein eS24 (94 aa).

The protein belongs to the eukaryotic ribosomal protein eS24 family.

This is Small ribosomal subunit protein eS24 from Nanoarchaeum equitans (strain Kin4-M).